We begin with the raw amino-acid sequence, 395 residues long: Lipoyl synthase, mitochondrial (395 aa).

The transit peptide at 1-14 directs the protein to the mitochondrion; sequence MISLRSISRSPAVQ. Cysteine 112, cysteine 117, cysteine 123, cysteine 142, cysteine 146, cysteine 149, and serine 357 together coordinate [4Fe-4S] cluster. The 220-residue stretch at 127 to 346 folds into the Radical SAM core domain; that stretch reads KKSEATATIM…RDTALQMGFL (220 aa).

Belongs to the radical SAM superfamily. Lipoyl synthase family. Requires [4Fe-4S] cluster as cofactor.

The protein resides in the mitochondrion. It carries out the reaction [[Fe-S] cluster scaffold protein carrying a second [4Fe-4S](2+) cluster] + N(6)-octanoyl-L-lysyl-[protein] + 2 oxidized [2Fe-2S]-[ferredoxin] + 2 S-adenosyl-L-methionine + 4 H(+) = [[Fe-S] cluster scaffold protein] + N(6)-[(R)-dihydrolipoyl]-L-lysyl-[protein] + 4 Fe(3+) + 2 hydrogen sulfide + 2 5'-deoxyadenosine + 2 L-methionine + 2 reduced [2Fe-2S]-[ferredoxin]. Its pathway is protein modification; protein lipoylation via endogenous pathway; protein N(6)-(lipoyl)lysine from octanoyl-[acyl-carrier-protein]: step 2/2. Catalyzes the radical-mediated insertion of two sulfur atoms into the C-6 and C-8 positions of the octanoyl moiety bound to the lipoyl domains of lipoate-dependent enzymes, thereby converting the octanoylated domains into lipoylated derivatives. The sequence is that of Lipoyl synthase, mitochondrial from Debaryomyces hansenii (strain ATCC 36239 / CBS 767 / BCRC 21394 / JCM 1990 / NBRC 0083 / IGC 2968) (Yeast).